Reading from the N-terminus, the 335-residue chain is uncharacterized protein (335 aa).

Solcar repeat units follow at residues 22–129 (VKPI…LLPL), 134–227 (GFPA…IRLF), and 244–327 (KDLY…TKKY). 6 helical membrane-spanning segments follow: residues 28-48 (MLSA…LDVV), 104-123 (GLVP…FLGY), 133-154 (WGFP…ATIV), 195-219 (GILN…FYWW), 246-263 (LYIN…ATLL), and 307-323 (CVKV…SYHL).

The protein belongs to the mitochondrial carrier (TC 2.A.29) family.

Its subcellular location is the mitochondrion inner membrane. This is an uncharacterized protein from Schizosaccharomyces pombe (strain 972 / ATCC 24843) (Fission yeast).